The primary structure comprises 293 residues: 3-hydroxybutyrate-oligomer hydrolase (293 aa).

This sequence belongs to the AB hydrolase superfamily.

It is found in the cytoplasm. It catalyses the reaction (3R)-hydroxybutanoate pentamer + H2O = (3R)-hydroxybutanoate tetramer + (R)-3-hydroxybutanoate + H(+). The catalysed reaction is (3R)-hydroxybutanoate tetramer + H2O = (3R)-hydroxybutanoate trimer + (R)-3-hydroxybutanoate + H(+). It carries out the reaction (3R)-hydroxybutanoate trimer + H2O = (3R)-hydroxybutanoate dimer + (R)-3-hydroxybutanoate + H(+). The enzyme catalyses (3R)-hydroxybutanoate dimer + H2O = 2 (R)-3-hydroxybutanoate + H(+). It catalyses the reaction [(3R)-hydroxybutanoate](n) + H2O = [(3R)-hydroxybutanoate](n-1) + (R)-3-hydroxybutanoate + H(+). In terms of biological role, catalyzes the degradation of various 3-hydroxybutyrate (3HB) oligomers at a high specific activity and artificial amorphous poly(3-hydroxybutyrate) (PHB) at a lower specific activity. Hydrolyzes the 3HB pentamer most efficiently than the tetramer, trimer and dimer. Does not hydrolyze native PHB granules and semicrystalline PHB. Participates in the mobilization of PHB along with other hydrolases. The polypeptide is 3-hydroxybutyrate-oligomer hydrolase (Cupriavidus necator (strain ATCC 17699 / DSM 428 / KCTC 22496 / NCIMB 10442 / H16 / Stanier 337) (Ralstonia eutropha)).